Consider the following 183-residue polypeptide: Translation initiation factor IF-3 (183 aa).

Belongs to the IF-3 family. In terms of assembly, monomer.

The protein resides in the cytoplasm. Its function is as follows. IF-3 binds to the 30S ribosomal subunit and shifts the equilibrium between 70S ribosomes and their 50S and 30S subunits in favor of the free subunits, thus enhancing the availability of 30S subunits on which protein synthesis initiation begins. The chain is Translation initiation factor IF-3 from Vibrio cholerae serotype O1 (strain ATCC 39315 / El Tor Inaba N16961).